The sequence spans 403 residues: Phosphopentomutase (403 aa).

Residues Asp-13, Asp-298, His-303, Asp-339, His-340, and His-351 each coordinate Mn(2+).

Belongs to the phosphopentomutase family. Requires Mn(2+) as cofactor.

It localises to the cytoplasm. It carries out the reaction 2-deoxy-alpha-D-ribose 1-phosphate = 2-deoxy-D-ribose 5-phosphate. It catalyses the reaction alpha-D-ribose 1-phosphate = D-ribose 5-phosphate. It participates in carbohydrate degradation; 2-deoxy-D-ribose 1-phosphate degradation; D-glyceraldehyde 3-phosphate and acetaldehyde from 2-deoxy-alpha-D-ribose 1-phosphate: step 1/2. In terms of biological role, isomerase that catalyzes the conversion of deoxy-ribose 1-phosphate (dRib-1-P) and ribose 1-phosphate (Rib-1-P) to deoxy-ribose 5-phosphate (dRib-5-P) and ribose 5-phosphate (Rib-5-P), respectively. The chain is Phosphopentomutase from Streptococcus pneumoniae serotype 19F (strain G54).